We begin with the raw amino-acid sequence, 181 residues long: Cytochrome P450 monooxygenase dtpC (181 aa).

A heme-binding site is contributed by cysteine 125.

This sequence belongs to the cytochrome P450 family. It depends on heme as a cofactor.

It participates in alkaloid biosynthesis. The protein operates within secondary metabolite biosynthesis. Its function is as follows. Cytochrome P450 monooxygenase; part of the gene cluster that mediates the biosynthesis of the dimeric diketopiperazine alkaloid ditryptophenaline. The nonribosomal peptide synthase dtpA accepts L-tryptophan and L-phenylalanine as its substrates and forms the phenylalanyl-tryptophanyl cyclic dipeptide product cyclophenylalanyltryptophenyl. The N-methyltransferase dtpB is responsible for the N-methylation of cyclophenylalanyltryptophenyl to yield cyclo-N-methylphenylalanyltryptophenyl. The cytochrome P450 monooxygenase is responsible not only for pyrroloindole ring formation but also for concurrent dimerization of N-methylphenylalanyltryptophanyl diketopiperazine monomers into a homodimeric product. The sequence is that of Cytochrome P450 monooxygenase dtpC from Aspergillus flavus (strain ATCC 200026 / FGSC A1120 / IAM 13836 / NRRL 3357 / JCM 12722 / SRRC 167).